The sequence spans 65 residues: Translational regulator CsrA (65 aa).

This sequence belongs to the CsrA/RsmA family. In terms of assembly, homodimer; the beta-strands of each monomer intercalate to form a hydrophobic core, while the alpha-helices form wings that extend away from the core.

It localises to the cytoplasm. Its function is as follows. A translational regulator that binds mRNA to regulate translation initiation and/or mRNA stability. Usually binds in the 5'-UTR at or near the Shine-Dalgarno sequence preventing ribosome-binding, thus repressing translation. Its main target seems to be the major flagellin gene, while its function is anatagonized by FliW. This is Translational regulator CsrA from Bordetella petrii (strain ATCC BAA-461 / DSM 12804 / CCUG 43448).